The chain runs to 559 residues: Potassium-transporting ATPase potassium-binding subunit (559 aa).

13 helical membrane-spanning segments follow: residues 5-25, 27-47, 63-83, 132-152, 170-190, 253-273, 283-303, 327-347, 356-376, 379-399, 416-436, 484-504, and 524-544; these read GFLL…PLGS, LARL…RILW, LLAL…LLFW, GLTV…FALI, LVRI…LFFI, LAQM…FGEA, LLWA…WAEV, FGVL…CGAV, ALGG…FGGV, GLYG…LMIG, MTAL…ALAM, LLAF…MAIA, and GALF…LTFI.

The protein belongs to the KdpA family. As to quaternary structure, the system is composed of three essential subunits: KdpA, KdpB and KdpC.

The protein resides in the cell inner membrane. Its function is as follows. Part of the high-affinity ATP-driven potassium transport (or Kdp) system, which catalyzes the hydrolysis of ATP coupled with the electrogenic transport of potassium into the cytoplasm. This subunit binds the periplasmic potassium ions and delivers the ions to the membrane domain of KdpB through an intramembrane tunnel. This chain is Potassium-transporting ATPase potassium-binding subunit, found in Salmonella enteritidis PT4 (strain P125109).